Reading from the N-terminus, the 369-residue chain is Septin-5 (369 aa).

Phosphothreonine is present on threonine 13. The region spanning 41–314 is the Septin-type G domain; that stretch reads KGFDFTLMVA…ENYRAHCIQQ (274 aa). Positions 51 to 58 are G1 motif; that stretch reads GESGLGKS. Residues 51 to 58, threonine 85, and glycine 111 contribute to the GTP site; that span reads GESGLGKS. Positions 108 to 111 are G3 motif; that stretch reads DTPG. Arginine 168 bears the Omega-N-methylarginine mark. The G4 motif stretch occupies residues 189 to 192; the sequence is AKAD. 190–198 provides a ligand contact to GTP; that stretch reads KADCLVPSE. Position 225 is a phosphoserine (serine 225). GTP is bound by residues glycine 248 and arginine 263. The residue at position 327 (serine 327) is a Phosphoserine. The residue at position 336 (threonine 336) is a Phosphothreonine. The stretch at 338-369 forms a coiled coil; sequence DAETEKLIRMKDEELRRMQEMLQRMKQQMQDQ.

It belongs to the TRAFAC class TrmE-Era-EngA-EngB-Septin-like GTPase superfamily. Septin GTPase family. In terms of assembly, septins polymerize into heterooligomeric protein complexes that form filaments, and can associate with cellular membranes, actin filaments and microtubules. GTPase activity is required for filament formation. Interacts with SEPTIN2 and SEPTIN5. In platelets, associated with a complex containing STX4. Interacts with PRKN; this interaction leads to SEPTIN5 ubiquitination and degradation. Interacts with DYRK1A. Interacts with STX1A; in the cerebellar cortex. Post-translationally, phosphorylated by DYRK1A. In platelets, phosphorylated in response to thrombin, phorbol-12-myristate-13-acetate and collagen. In terms of tissue distribution, expressed at high levels in the CNS, as well as in heart and platelets (at protein level).

The protein resides in the cytoplasm. Its subcellular location is the cytoskeleton. In terms of biological role, filament-forming cytoskeletal GTPase. May play a role in cytokinesis (Potential). May play a role in platelet secretion. The protein is Septin-5 of Homo sapiens (Human).